We begin with the raw amino-acid sequence, 360 residues long: uncharacterized protein (360 aa).

Positions 4-235 (LSLQHIQKIY…PANMFVAGFI (232 aa)) constitute an ABC transporter domain. 37-44 (GPSGCGKS) contributes to the ATP binding site.

This sequence belongs to the ABC transporter superfamily.

This is an uncharacterized protein from Escherichia coli O6:K15:H31 (strain 536 / UPEC).